The chain runs to 629 residues: MAKWNPQKRVLNHEHTRFWRFELRDVDEPNLQKEVFPYDEVSRIDFDHRIIPIQPAEEIFITDTTFRDGQQARPPYTTQQIVDLYQMMSRLGGYNGIIRQTEFFLYSNRDKEAVRMCQDLGLQYPEITGWIRAAREDIPLVKEAGLKETGILTSVSDYHIFLKLNMTRSQALEEYLGIVKAILDAGIVPRCHFEDITRADIYGFCIPFAIELMKLREESGVDIKIRLCDTMGYGVTYPGASLPRGVDKLVRAFIDDADVPGRLLEWHGHNDFHKALINATTAWLYGCSAANSTLLGLGERTGNPPIEGLIIEYIGLMGKTNGIDTTVITDIANYFKNEIEYKIPSNYPFVGADFNVTRAGVHADGLIKSEEIYNIFNTTKILKRPIVPMITDKSGKAGIAYWINSHFGLSGDSTVDKRHPGISKINKWIADEYELGRVTTISTEELEAKVRKYMPELFMSDLERIKFKAAEAAIAVLRKIIDDPAMKTMQPELQEPVMQRFIEEYPSIQFAYVVDMNGKKTTRNITNIVDRAKYENYGVGTDQSDREWFIKPLQTGKLHVTDFYISKMTGALCFTVSEPITDDNDDMVGIFGVDIRVEDLVKEPEYIAEATQIALKAEYDAKYKSDHWL.

The Pyruvate carboxyltransferase domain occupies 59–329 (IFITDTTFRD…TNGIDTTVIT (271 aa)). Residues 497-601 (VMQRFIEEYP…GVDIRVEDLV (105 aa)) form the Cache domain.

The protein belongs to the alpha-IPM synthase/homocitrate synthase family. As to quaternary structure, homotetramer. The cofactor is Co(2+). It depends on Mn(2+) as a cofactor.

It carries out the reaction oxaloacetate + acetyl-CoA + H2O = citrate + CoA + H(+). With respect to regulation, inhibited by p-hydroxymercuribenzoate and EDTA. Catalyzes the condensation of the acetyl group of acetyl-CoA with oxaloacetate to form citrate. In Syntrophus aciditrophicus (strain SB), this protein is Citrate (Re)-synthase.